The sequence spans 952 residues: Valine--tRNA ligase (952 aa).

The 'HIGH' region motif lies at 42–52; that stretch reads PNVTGSLHMGH. The 'KMSKS' region motif lies at 554 to 558; sequence KMSKS. Lys-557 provides a ligand contact to ATP. Residues 888–952 adopt a coiled-coil conformation; that stretch reads AELARLDGEI…EEQKKTIAAL (65 aa).

The protein belongs to the class-I aminoacyl-tRNA synthetase family. ValS type 1 subfamily. Monomer.

The protein localises to the cytoplasm. The enzyme catalyses tRNA(Val) + L-valine + ATP = L-valyl-tRNA(Val) + AMP + diphosphate. Functionally, catalyzes the attachment of valine to tRNA(Val). As ValRS can inadvertently accommodate and process structurally similar amino acids such as threonine, to avoid such errors, it has a 'posttransfer' editing activity that hydrolyzes mischarged Thr-tRNA(Val) in a tRNA-dependent manner. The polypeptide is Valine--tRNA ligase (Vibrio parahaemolyticus serotype O3:K6 (strain RIMD 2210633)).